The chain runs to 530 residues: MPQKWISALLLLQISFCFRSGNCGKVLVWPLEYSHWMNLKIILDELVQRGHEVTVLRPSSSVSLDPKKASGLVYETSPTTSNNDEVEKSFYPVGDMWTYDVPKYTCLRYYPSLNKMFGQFSDLWLQLCREVVSNKELIAKLKESQFDVVLSDAVGPCGELIAEILQLPFVYSLRFATAPGIEKYSAGQPFPPSYVPIILSGFSGQMTFMERVENMLCLLYFDSWFESFPAKDWDPFFSEILGRPTTMVDTMKKAEIWLIRSYWDLEFPRPSLPNIEFVGGLHCQPAKPLPKEMEDFAQSSGEHGVWVFSLGSMIRNITQERANTIASALAQIPQKVFWRFEGKKPDTLGPNTRVFKWIPQNDLLGHPKTKAFVTHGGANGIYESIHYGIPPMVGIPLFAEQRDNVAHMVAKGAAVSIDFHTMSSSDLLNALKAVINNPSYKKKVMWLSAIHHDQPLKPLDRAVFWIEFVMRHKGAKHLRPLAHNLALVSVHSLDVIGFLLACVLAIVLLAVKCCLFLYRFFVKVAKNKRD.

A signal peptide spans 1-17 (MPQKWISALLLLQISFC). Residue asparagine 316 is glycosylated (N-linked (GlcNAc...) asparagine). Residues 374-380 (THGGANG) and glutamate 400 each bind UDP-alpha-D-glucuronate. Residues 496 to 516 (IGFLLACVLAIVLLAVKCCLF) form a helical membrane-spanning segment.

Belongs to the UDP-glycosyltransferase family.

The protein localises to the endoplasmic reticulum membrane. It carries out the reaction glucuronate acceptor + UDP-alpha-D-glucuronate = acceptor beta-D-glucuronoside + UDP + H(+). The enzyme catalyses 17alpha-estradiol + UDP-alpha-D-glucuronate = 17alpha-estradiol 17-O-(beta-D-glucuronate) + UDP + H(+). It catalyses the reaction 17beta-estradiol + UDP-alpha-D-glucuronate = 17beta-estradiol 17-O-(beta-D-glucuronate) + UDP + H(+). The catalysed reaction is 2-hydroxy-17beta-estradiol + UDP-alpha-D-glucuronate = 2-hydroxy-17beta-estradiol 3-O-(beta-D-glucuronate) + UDP + H(+). It carries out the reaction 4-hydroxy-17beta-estradiol + UDP-alpha-D-glucuronate = 17beta-estradiol 4-O-(beta-D-glucuronate) + UDP + H(+). The enzyme catalyses 4-hydroxyestrone + UDP-alpha-D-glucuronate = estrone 4-O-(beta-D-glucuronate) + UDP + H(+). It catalyses the reaction 16alpha-hydroxyestrone + UDP-alpha-D-glucuronate = 16alpha-hydroxyestrone 16-O-(beta-D-glucuronate) + UDP + H(+). The catalysed reaction is 16alpha,17beta-estriol + UDP-alpha-D-glucuronate = 16alpha,17beta-estriol 16-O-(beta-D-glucuronate) + UDP + H(+). It carries out the reaction 16beta,17beta-estriol + UDP-alpha-D-glucuronate = 16beta,17beta-estriol 16-O-(beta-D-glucuronate) + UDP + H(+). The enzyme catalyses 16alpha,17alpha-estriol + UDP-alpha-D-glucuronate = 16alpha,17alpha-estriol 16-O-(beta-D-glucuronate) + UDP + H(+). It catalyses the reaction 16alpha,17alpha-estriol + UDP-alpha-D-glucuronate = 16alpha,17alpha-estriol 17-O-(beta-D-glucuronate) + UDP + H(+). The catalysed reaction is epitestosterone + UDP-alpha-D-glucuronate = epitestosterone 17-O-(beta-D-glucuronate) + UDP + H(+). It carries out the reaction hyodeoxycholate + UDP-alpha-D-glucuronate = hyodeoxycholate 6-O-(beta-D-glucuronate) + UDP + H(+). The enzyme catalyses hyocholate + UDP-alpha-D-glucuronate = hyocholate 6-O-(beta-D-glucuronate) + UDP + H(+). It catalyses the reaction all-trans-retinoate + UDP-alpha-D-glucuronate = all-trans-retinoyl-1-O-(beta-D-glucuronate) + UDP. The catalysed reaction is all-trans-4-hydroxyretinoate + UDP-alpha-D-glucuronate = all-trans-4-hydroxy-4-O-(beta-D-glucuronide)-retinoate + UDP + H(+). It carries out the reaction (E)-ferulate + UDP-alpha-D-glucuronate = (E)-ferulic acid beta-D-glucuronate ester + UDP. The enzyme catalyses 8-iso-prostaglandin F2alpha + UDP-alpha-D-glucuronate = 8-iso-prostaglandin F2alpha-glucuronide + UDP + H(+). It catalyses the reaction 5-epi-5-F2t-IsoP + UDP-alpha-D-glucuronate = 5-epi-5-F2t-IsoP-glucuronide + UDP + H(+). The catalysed reaction is (5Z,8Z,11Z,14Z)-eicosatetraenoate + UDP-alpha-D-glucuronate = O-[(5Z),(8Z),(11Z),(14Z)-eicosatetraenoyl]-beta-D-glucuronate + UDP. It carries out the reaction 15-hydroxy-(5Z,8Z,11Z,13E)-eicosatetraenoate + UDP-alpha-D-glucuronate = 15-O-(beta-D-glucuronosyl)-(5Z,8Z,11Z,14Z)-eicosatetraenoate + UDP + H(+). The enzyme catalyses 20-hydroxy-(5Z,8Z,11Z,14Z)-eicosatetraenoate + UDP-alpha-D-glucuronate = 20-O-(beta-D-glucuronosyl)-(5Z,8Z,11Z,14Z)-eicosatetraenoate + UDP + H(+). It catalyses the reaction (E)-ferulate + UDP-alpha-D-glucuronate = (E)-4-O-(beta-D-glucuronosyl)-ferulate + UDP + H(+). The catalysed reaction is prostaglandin B1 + UDP-alpha-D-glucuronate = 15-O-(beta-D-glucuronosyl)-prostaglandin B1 + UDP + H(+). It carries out the reaction mycophenolate + UDP-alpha-D-glucuronate = mycophenolic acid O-acyl-beta-D-glucuronide + UDP. The enzyme catalyses losartan + UDP-alpha-D-glucuronate = losartan-2-N-beta-D-glucuronide + UDP. It catalyses the reaction candesartan + UDP-alpha-D-glucuronate = candesartan O-beta-D-glucuronoside + UDP. The catalysed reaction is candesartan + UDP-alpha-D-glucuronate = candesartan-2-N-beta-D-glucuronide + UDP. It carries out the reaction zolasartan + UDP-alpha-D-glucuronate = zolarsartan O-beta-D-glucuronoside + UDP. UDP-glucuronosyltransferase (UGT) that catalyzes phase II biotransformation reactions in which lipophilic substrates are conjugated with glucuronic acid to increase the metabolite's water solubility, thereby facilitating excretion into either the urine or bile. Essential for the elimination and detoxification of drugs, xenobiotics and endogenous compounds. Catalyzes the glucuronidation of endogenous steroid hormones such as androgens (epitestosterone, androsterone) and estrogens (estradiol, epiestradiol, estriol, catechol estrogens). Also regulates the levels of retinoic acid, a major metabolite of vitamin A involved in apoptosis, cellular growth and differentiation, and embryonic development. Contributes to bile acid (BA) detoxification by catalyzing the glucuronidation of BA substrates, which are natural detergents for dietary lipids absorption. Involved in the glucuronidation of arachidonic acid (AA) and AA-derived eicosanoids including 15-HETE, 20-HETE, PGE2, PGB1 and F2-isoprostanes (8-iso-PGF2alpha and 5-epi-5-F2t-IsoP). Involved in the glucuronidation of the phytochemical ferulic acid at the phenolic or the carboxylic acid group. Involved in the glucuronidation of the AGTR1 angiotensin receptor antagonist losartan, caderastan and zolarsatan, drugs which can inhibit the effect of angiotensin II. Also metabolizes mycophenolate, an immunosuppressive agent. In Rattus norvegicus (Rat), this protein is UDP-glucuronosyltransferase 2B7.